The chain runs to 417 residues: Transmembrane protease serine 11D (417 aa).

At 1 to 17 (MYRPRSMVSPSRFFNPF) the chain is on the cytoplasmic side. A helical; Signal-anchor for type II membrane protein membrane pass occupies residues 18–38 (MVALIVIITVGLLAMTAGLLI). Residues 39–417 (HFLAFDKRAY…RNWIRQQTGI (379 aa)) lie on the Extracellular side of the membrane. The SEA domain occupies 46-162 (RAYFYHSNFH…SNGITSLTDQ (117 aa)). 4 disulfides stabilise this stretch: cysteine 172–cysteine 291, cysteine 211–cysteine 227, cysteine 336–cysteine 352, and cysteine 363–cysteine 392. The 231-residue stretch at 186–416 (IIGGTQAETG…YRNWIRQQTG (231 aa)) folds into the Peptidase S1 domain. Active-site charge relay system residues include histidine 226 and aspartate 271. Serine 367 serves as the catalytic Charge relay system.

This sequence belongs to the peptidase S1 family. As to quaternary structure, monomer. As to expression, isoform 1 and isoform 2 are expressed in the esophagus, tongue and trachea. Isoform 2 is also highly expressed in the adrenal cortex and heart.

It localises to the cell membrane. The protein localises to the secreted. Its function is as follows. May play some biological role in the host defense system on the mucous membrane independently of or in cooperation with other substances in airway mucous or bronchial secretions. Plays a role in the proteolytic processing of ACE2. Preferentially cleaves the C-terminal side of arginine residues at the P1 position of certain peptides. Isoform 2 may play a key role in regulating adrenal proliferation by specifically cleaving N-POMC. This chain is Transmembrane protease serine 11D (Tmprss11d), found in Rattus norvegicus (Rat).